Consider the following 617-residue polypeptide: Chaperone protein DnaK (617 aa).

Residue Thr-175 is modified to Phosphothreonine; by autocatalysis. A compositionally biased stretch (low complexity) spans 578-592 (AGAEAQQGAQGTQGA). A disordered region spans residues 578–617 (AGAEAQQGAQGTQGADMGGNAQGKDDDNVVDADFKVEDDK). Basic and acidic residues predominate over residues 600 to 617 (GKDDDNVVDADFKVEDDK).

It belongs to the heat shock protein 70 family.

In terms of biological role, acts as a chaperone. This chain is Chaperone protein DnaK, found in Clostridium novyi (strain NT).